Here is a 212-residue protein sequence, read N- to C-terminus: Peptide methionine sulfoxide reductase MsrA (212 aa).

The active site involves Cys-52.

It belongs to the MsrA Met sulfoxide reductase family.

It catalyses the reaction L-methionyl-[protein] + [thioredoxin]-disulfide + H2O = L-methionyl-(S)-S-oxide-[protein] + [thioredoxin]-dithiol. It carries out the reaction [thioredoxin]-disulfide + L-methionine + H2O = L-methionine (S)-S-oxide + [thioredoxin]-dithiol. Has an important function as a repair enzyme for proteins that have been inactivated by oxidation. Catalyzes the reversible oxidation-reduction of methionine sulfoxide in proteins to methionine. The chain is Peptide methionine sulfoxide reductase MsrA from Cronobacter sakazakii (strain ATCC BAA-894) (Enterobacter sakazakii).